The following is a 158-amino-acid chain: Oocyte-secreted protein 2 (158 aa).

Positions 1-17 (MALEVLMLLAVLIWTGA) are cleaved as a signal peptide.

This sequence belongs to the PLAC1 family. Highly expressed in oocytes.

The protein resides in the secreted. It localises to the cytoplasm. In terms of biological role, involved in oocyte maturation. The protein is Oocyte-secreted protein 2 (OOSP2) of Homo sapiens (Human).